We begin with the raw amino-acid sequence, 224 residues long: Small ribosomal subunit protein uS3 (224 aa).

Positions 38-106 constitute a KH type-2 domain; it reads LREFVKEKLG…EVYLNVVEVR (69 aa).

Belongs to the universal ribosomal protein uS3 family. In terms of assembly, part of the 30S ribosomal subunit. Forms a tight complex with proteins S10 and S14.

In terms of biological role, binds the lower part of the 30S subunit head. Binds mRNA in the 70S ribosome, positioning it for translation. This Anaeromyxobacter dehalogenans (strain 2CP-1 / ATCC BAA-258) protein is Small ribosomal subunit protein uS3.